The chain runs to 342 residues: MSKAYEQSGVNIHAGYEAVERMSSHVKRTMRKEVIGGLGGFGATFDLSQLNMTAPVLVSGTDGVGTKLKLAIDYGKHDSIGIDAVAMCVNDILTTGAEPLYFLDYIATNKVVPEVIEQIVKGISDACVETNTALIGGETAEMGEMYHEGEYDVAGFAVGAVEKDDYVDGSEVKEGQVVIGLASSGIHSNGYSLVRKLINESGIDLASNFDNRPFIDVFLEPTKLYVKPVLALKKEVSIKAMNHITGGGFYENIPRALPAGYAARIDTTSFPTPKIFDWLQQQGNIETNEMYNIFNMGIGYTVIVDEKDAPRALKILAEQNVEAYQIGHIVKNESTAIELLGV.

It belongs to the AIR synthase family.

Its subcellular location is the cytoplasm. The catalysed reaction is 2-formamido-N(1)-(5-O-phospho-beta-D-ribosyl)acetamidine + ATP = 5-amino-1-(5-phospho-beta-D-ribosyl)imidazole + ADP + phosphate + H(+). Its pathway is purine metabolism; IMP biosynthesis via de novo pathway; 5-amino-1-(5-phospho-D-ribosyl)imidazole from N(2)-formyl-N(1)-(5-phospho-D-ribosyl)glycinamide: step 2/2. This is Phosphoribosylformylglycinamidine cyclo-ligase from Staphylococcus aureus (strain MRSA252).